The chain runs to 402 residues: TBC1 domain family member 20 (402 aa).

A disordered region spans residues 1–27 (MALRPSKGDGSAGRWDRGAGKADFNAK). Residues 14 to 26 (RWDRGAGKADFNA) are compositionally biased toward basic and acidic residues. Residues 59–245 (LLTDEIRCQV…RLYDFFLACH (187 aa)) enclose the Rab-GAP TBC domain. A run of 2 helical transmembrane segments spans residues 237–257 (LYDF…AVIV) and 366–386 (FVKL…LAVV).

Its subcellular location is the membrane. Its function is as follows. GTPase-activating protein specific for Rab1 and Rab2 small GTPase families for which it can accelerate the intrinsic GTP hydrolysis rate by more than five orders of magnitude. Also shows GAP activity for RAB18 GTPase. Promotes RAB18 dissociation from the endoplasmic reticulum (ER) membrane into the cytosol, probably through stimulating RAB18 GTP-hydrolysis. Involved in maintaining endoplasmic reticulum structure. The sequence is that of TBC1 domain family member 20 from Mus musculus (Mouse).